A 435-amino-acid polypeptide reads, in one-letter code: Actin-like protein 7A (435 aa).

2 disordered regions span residues 1–20 (MWAP…VGNQ) and 29–65 (QTAS…ERPK). The required for interaction with TES stretch occupies residues 31 to 51 (ASLRDGPAKRAVWVRRRSSEP). Residues 47 to 65 (RSSEPQEPTESKAAKERPK) show a composition bias toward basic and acidic residues.

The protein belongs to the actin family. In terms of assembly, interacts (via N-terminus) with TES (via LIM domain 2). Heterodimer with TES; the heterodimer interacts with ENAH to form a heterotrimer. Interacts with ACTL9. Interacts with CYLC1; the interaction may be relevant for proper acrosome attachment to the nuclear envelope.

The protein resides in the cytoplasm. Its subcellular location is the cytoskeleton. It is found in the golgi apparatus. The protein localises to the nucleus. Functionally, essential for normal spermatogenesis and male fertility. Required for normal sperm head morphology, acroplaxome formation, acrosome attachment, and acrosome granule stability. May anchor and stabilize acrosomal adherence to the acroplaxome at least in part by facilitating the presence of F-actin in the subacrosomal space. May play an important role in formation and fusion of Golgi-derived vesicles during acrosome biogenesis. In Macaca fascicularis (Crab-eating macaque), this protein is Actin-like protein 7A (ACTL7A).